The primary structure comprises 287 residues: Eukaryotic translation initiation factor 3 subunit G (287 aa).

Disordered regions lie at residues 1-34 (MSKL…KDGT) and 159-184 (TAGG…YVPP). In terms of domain architecture, RRM spans 207-285 (ATLRVTNVSE…LILRVEFAKR (79 aa)).

It belongs to the eIF-3 subunit G family. Component of the eukaryotic translation initiation factor 3 (eIF-3) complex.

The protein localises to the cytoplasm. Functionally, RNA-binding component of the eukaryotic translation initiation factor 3 (eIF-3) complex, which is involved in protein synthesis of a specialized repertoire of mRNAs and, together with other initiation factors, stimulates binding of mRNA and methionyl-tRNAi to the 40S ribosome. The eIF-3 complex specifically targets and initiates translation of a subset of mRNAs involved in cell proliferation. This subunit can bind 18S rRNA. The sequence is that of Eukaryotic translation initiation factor 3 subunit G (tif35) from Aspergillus oryzae (strain ATCC 42149 / RIB 40) (Yellow koji mold).